The chain runs to 407 residues: Protein COS9 (407 aa).

3 helical membrane-spanning segments follow: residues 75–95 (TWLL…IKSI), 98–118 (IFPF…LPNI), and 261–281 (IFNL…YVSW).

Belongs to the DUP/COS family.

Its subcellular location is the membrane. This Saccharomyces cerevisiae (strain ATCC 204508 / S288c) (Baker's yeast) protein is Protein COS9 (COS9).